Here is a 201-residue protein sequence, read N- to C-terminus: Glycerol-3-phosphate acyltransferase (201 aa).

Transmembrane regions (helical) follow at residues 5–25, 55–75, 88–108, 118–138, and 164–184; these read LLGA…FGVV, KMGV…ILVA, WVTA…WLGF, LGIF…GYAV, and TYGP…LIFL.

This sequence belongs to the PlsY family. In terms of assembly, probably interacts with PlsX.

The protein resides in the cell inner membrane. It carries out the reaction an acyl phosphate + sn-glycerol 3-phosphate = a 1-acyl-sn-glycero-3-phosphate + phosphate. It participates in lipid metabolism; phospholipid metabolism. Catalyzes the transfer of an acyl group from acyl-phosphate (acyl-PO(4)) to glycerol-3-phosphate (G3P) to form lysophosphatidic acid (LPA). This enzyme utilizes acyl-phosphate as fatty acyl donor, but not acyl-CoA or acyl-ACP. This chain is Glycerol-3-phosphate acyltransferase, found in Anaeromyxobacter sp. (strain K).